Here is a 1457-residue protein sequence, read N- to C-terminus: DNA-directed RNA polymerase III subunit RPC1 (1457 aa).

7 residues coordinate Zn(2+): Cys67, Cys70, Cys77, His80, Cys107, Cys110, and Cys154. Mg(2+)-binding residues include Asp508, Asp510, and Asp512. The interval 854 to 866 (PPEFLFHSISGRE) is bridging helix.

The protein belongs to the RNA polymerase beta' chain family. In terms of assembly, component of the RNA polymerase III (Pol III) complex consisting of 17 subunits.

It is found in the nucleus. It carries out the reaction RNA(n) + a ribonucleoside 5'-triphosphate = RNA(n+1) + diphosphate. In terms of biological role, DNA-dependent RNA polymerase catalyzes the transcription of DNA into RNA using the four ribonucleoside triphosphates as substrates. Largest and catalytic core component of RNA polymerase III which synthesizes small RNAs, such as 5S rRNA and tRNAs. Forms the polymerase active center together with the second largest subunit. A single-stranded DNA template strand of the promoter is positioned within the central active site cleft of Pol III. A bridging helix emanates from RPC1 and crosses the cleft near the catalytic site and is thought to promote translocation of Pol III by acting as a ratchet that moves the RNA-DNA hybrid through the active site by switching from straight to bent conformations at each step of nucleotide addition. The protein is DNA-directed RNA polymerase III subunit RPC1 (RPC1) of Debaryomyces hansenii (strain ATCC 36239 / CBS 767 / BCRC 21394 / JCM 1990 / NBRC 0083 / IGC 2968) (Yeast).